We begin with the raw amino-acid sequence, 137 residues long: ATP synthase epsilon chain (137 aa).

This sequence belongs to the ATPase epsilon chain family. As to quaternary structure, F-type ATPases have 2 components, CF(1) - the catalytic core - and CF(0) - the membrane proton channel. CF(1) has five subunits: alpha(3), beta(3), gamma(1), delta(1), epsilon(1). CF(0) has three main subunits: a, b and c.

Its subcellular location is the cell membrane. Functionally, produces ATP from ADP in the presence of a proton gradient across the membrane. The chain is ATP synthase epsilon chain from Caldicellulosiruptor bescii (strain ATCC BAA-1888 / DSM 6725 / KCTC 15123 / Z-1320) (Anaerocellum thermophilum).